Consider the following 311-residue polypeptide: Putative dihydroorotate dehydrogenase A (fumarate) (311 aa).

Substrate-binding positions include K45, 69–73 (NSMGL), and N128. 45–46 (KT) serves as a coordination point for FMN. FMN is bound at residue N128. The Nucleophile role is filled by C131. 2 residues coordinate FMN: K165 and V193. 194-195 (NS) contacts substrate. FMN-binding positions include G220, 248–249 (GG), and 270–271 (GT).

Belongs to the dihydroorotate dehydrogenase family. Type 1 subfamily. As to quaternary structure, homodimer. FMN serves as cofactor.

The protein localises to the cytoplasm. It catalyses the reaction (S)-dihydroorotate + fumarate = orotate + succinate. Its pathway is pyrimidine metabolism; UMP biosynthesis via de novo pathway. Its function is as follows. Catalyzes the conversion of dihydroorotate to orotate with fumarate as the electron acceptor. The polypeptide is Putative dihydroorotate dehydrogenase A (fumarate) (pyrD) (Streptococcus pyogenes serotype M5 (strain Manfredo)).